A 302-amino-acid chain; its full sequence is Protoheme IX farnesyltransferase (302 aa).

9 helical membrane-spanning segments follow: residues 27-47, 48-68, 97-117, 119-139, 148-168, 176-196, 219-239, 240-260, and 280-300; these read VLTL…QSIH, PVLG…AGAL, SALH…GLAL, VLAA…YTIW, IVIG…AATG, LLFA…ALFI, IQIM…WAMG, LTGA…LLLA, and LFGF…ADKV.

Belongs to the UbiA prenyltransferase family. Protoheme IX farnesyltransferase subfamily.

It localises to the cell inner membrane. It carries out the reaction heme b + (2E,6E)-farnesyl diphosphate + H2O = Fe(II)-heme o + diphosphate. Its pathway is porphyrin-containing compound metabolism; heme O biosynthesis; heme O from protoheme: step 1/1. Its function is as follows. Converts heme B (protoheme IX) to heme O by substitution of the vinyl group on carbon 2 of heme B porphyrin ring with a hydroxyethyl farnesyl side group. The polypeptide is Protoheme IX farnesyltransferase (Rhizorhabdus wittichii (strain DSM 6014 / CCUG 31198 / JCM 15750 / NBRC 105917 / EY 4224 / RW1) (Sphingomonas wittichii)).